The sequence spans 286 residues: 4-diphosphocytidyl-2-C-methyl-D-erythritol kinase (286 aa).

Residue K10 is part of the active site. Residue 100–110 (PMGSGLGGGSS) coordinates ATP. D142 is an active-site residue.

It belongs to the GHMP kinase family. IspE subfamily. As to quaternary structure, homodimer.

The catalysed reaction is 4-CDP-2-C-methyl-D-erythritol + ATP = 4-CDP-2-C-methyl-D-erythritol 2-phosphate + ADP + H(+). Its pathway is isoprenoid biosynthesis; isopentenyl diphosphate biosynthesis via DXP pathway; isopentenyl diphosphate from 1-deoxy-D-xylulose 5-phosphate: step 3/6. Functionally, catalyzes the phosphorylation of the position 2 hydroxy group of 4-diphosphocytidyl-2C-methyl-D-erythritol. In Buchnera aphidicola subsp. Acyrthosiphon pisum (strain APS) (Acyrthosiphon pisum symbiotic bacterium), this protein is 4-diphosphocytidyl-2-C-methyl-D-erythritol kinase.